The sequence spans 354 residues: GTPase Obg (354 aa).

One can recognise an Obg domain in the interval 1 to 159 (MKFVDEVKIH…RDLVLELKLL (159 aa)). An OBG-type G domain is found at 160–333 (ADVGIVGYPN…LLDAVGRALF (174 aa)). GTP is bound by residues 166–173 (GYPNAGKS), 191–195 (FTTLT), 212–215 (DIPG), 283–286 (TKID), and 314–316 (SAV). Mg(2+)-binding residues include Ser173 and Thr193.

Belongs to the TRAFAC class OBG-HflX-like GTPase superfamily. OBG GTPase family. In terms of assembly, monomer. Mg(2+) serves as cofactor.

Its subcellular location is the cytoplasm. Functionally, an essential GTPase which binds GTP, GDP and possibly (p)ppGpp with moderate affinity, with high nucleotide exchange rates and a fairly low GTP hydrolysis rate. Plays a role in control of the cell cycle, stress response, ribosome biogenesis and in those bacteria that undergo differentiation, in morphogenesis control. The polypeptide is GTPase Obg (Anaeromyxobacter dehalogenans (strain 2CP-1 / ATCC BAA-258)).